The following is a 460-amino-acid chain: V-type ATP synthase beta chain (460 aa).

Belongs to the ATPase alpha/beta chains family.

In terms of biological role, produces ATP from ADP in the presence of a proton gradient across the membrane. The V-type beta chain is a regulatory subunit. This chain is V-type ATP synthase beta chain, found in Clostridium perfringens (strain ATCC 13124 / DSM 756 / JCM 1290 / NCIMB 6125 / NCTC 8237 / Type A).